Here is a 142-residue protein sequence, read N- to C-terminus: MKVNPFVSSDSGKSRKAHFNAPSHERRRIMSAPLTKELRTKHGIRAIPIRTDDEVVVMRGRHKGNTGRVLRCYRKKFVIHIDKITREKANGSTVHIGIHPSKVAITKLKLDKDRRALVERKAAGRSRVTGILKGKHTDETVN.

Residues 1-11 (MKVNPFVSSDS) show a composition bias toward polar residues. Residues 1–24 (MKVNPFVSSDSGKSRKAHFNAPSH) are disordered.

This sequence belongs to the universal ribosomal protein uL24 family.

The polypeptide is Large ribosomal subunit protein uL24 (rpl-26) (Caenorhabditis elegans).